Here is a 72-residue protein sequence, read N- to C-terminus: uncharacterized protein (72 aa).

The chain crosses the membrane as a helical span at residues 23–45 (ITNLLITTILLCFFNATTYWKLF).

It localises to the membrane. This is an uncharacterized protein from Schizosaccharomyces pombe (strain 972 / ATCC 24843) (Fission yeast).